A 398-amino-acid polypeptide reads, in one-letter code: Steroid C26-monooxygenase (398 aa).

Cys340 contributes to the heme binding site.

This sequence belongs to the cytochrome P450 family. Heme is required as a cofactor.

The catalysed reaction is cholest-4-en-3-one + 6 reduced [2Fe-2S]-[ferredoxin] + 3 O2 + 5 H(+) = (25R)-3-oxocholest-4-en-26-oate + 6 oxidized [2Fe-2S]-[ferredoxin] + 4 H2O. The enzyme catalyses cholest-4-en-3-one + 2 reduced [2Fe-2S]-[ferredoxin] + O2 + 2 H(+) = (25R)-3-oxocholest-4-en-26-ol + 2 oxidized [2Fe-2S]-[ferredoxin] + H2O. It catalyses the reaction (25R)-3-oxocholest-4-en-26-ol + 2 reduced [2Fe-2S]-[ferredoxin] + O2 + 2 H(+) = (25R)-3-oxocholest-4-en-26-al + 2 oxidized [2Fe-2S]-[ferredoxin] + 2 H2O. It carries out the reaction (25R)-3-oxocholest-4-en-26-al + 2 reduced [2Fe-2S]-[ferredoxin] + O2 + H(+) = (25R)-3-oxocholest-4-en-26-oate + 2 oxidized [2Fe-2S]-[ferredoxin] + H2O. The catalysed reaction is cholesterol + NADPH + O2 + H(+) = 26-hydroxycholesterol + NADP(+) + H2O. The enzyme catalyses 26-hydroxycholesterol + 2 reduced [2Fe-2S]-[ferredoxin] + O2 + 2 H(+) = (3beta)-hydroxy-cholest-5-en-26-al + 2 oxidized [2Fe-2S]-[ferredoxin] + 2 H2O. It catalyses the reaction (3beta)-hydroxy-cholest-5-en-26-al + NADPH + O2 = (3beta)-hydroxy-cholest-5-en-26-oate + NADP(+) + H2O. It carries out the reaction (25S)-3-oxocholest-4-en-26-ol + 2 reduced [2Fe-2S]-[ferredoxin] + O2 + 2 H(+) = (25S)-3-oxocholest-4-en-26-al + 2 oxidized [2Fe-2S]-[ferredoxin] + 2 H2O. The catalysed reaction is (25S)-3-oxocholest-4-en-26-al + 2 reduced [2Fe-2S]-[ferredoxin] + O2 + H(+) = (25S)-3-oxocholest-4-en-26-oate + 2 oxidized [2Fe-2S]-[ferredoxin] + H2O. It participates in steroid metabolism; cholesterol degradation. Its activity is regulated as follows. Inhibited by econazole, clotrimazole and miconazole. Involved in the utilization of cholesterol as the sole carbon and energy source by degrading the side chain during infection. Primarily catalyzes the sequential oxidation of the terminal methyl of cholest-4-en-3-one into (25R)-26-hydroxycholest-4-en-3-one (alcohol), (25R)-26-oxocholest-4-en-3-one (aldehyde), to finally yield the carboxylic acid (25R)-3-oxocholest-4-en-26-oate. In vitro, Cyp142 catalyzes with equal preference the oxidation of both (25R)- and (25S)-26-hydroxycholest-4-en-3-one diastereomers to the corresponding carboxylic acid which is a prerequisite for entry into the beta-oxidation pathway. Also able to sequentially oxidize cholesterol itself, not only cholest-4-en-3-one. This Mycobacterium tuberculosis (strain ATCC 25618 / H37Rv) protein is Steroid C26-monooxygenase (cyp142).